The chain runs to 453 residues: MGSKTPDGHRQSPDASNSSELKPASPNPKPSQNGSQSADLDRGVVGEDDDDDDENEEVGVITTNAEKKKKRKKSKKKNKKSKSGAAPATQQTTPPRVPLSTLFPSGYPVGELVPYENTARTTDEESQYNSRLWDEDLLTDYRQAAEIHRQVRQYAQAELIKPGASLQSIAEGIEDGVRALCGHQGLDTGDALKAGMGFPTGLCLNNIAAHWTPNPGGKDVILEKSDVLKVDFGVHINGRIVDSAFTVAFDHTYDNLLTAVKEATNTGIMVHVFLDDLVGSEVMESYEVDLAGKTIPVKAIRNITGHDILRYNIHGGKQIPFIKNNNPDKMEEGEVFAIETFGSTGKGVLDDDIGIYGYGRNANVPGSHLRLASAKSLLKTIDANFGSLVFCRRYLERLGVKSYHLGMKNLIDNGIVESYAPLVDVKGSYTAQFEHTILLHSGGKEVISRGEDY.

Basic and acidic residues predominate over residues 1–12 (MGSKTPDGHRQS). The disordered stretch occupies residues 1 to 101 (MGSKTPDGHR…TTPPRVPLST (101 aa)). The segment covering 46–57 (GEDDDDDDENEE) has biased composition (acidic residues). Over residues 67 to 82 (KKKKRKKSKKKNKKSK) the composition is skewed to basic residues. Substrate is bound at residue histidine 210. A divalent metal cation-binding residues include aspartate 231, aspartate 242, and histidine 306. Histidine 314 is a substrate binding site. Positions 339 and 434 each coordinate a divalent metal cation.

This sequence belongs to the peptidase M24A family. Methionine aminopeptidase eukaryotic type 2 subfamily. Requires Co(2+) as cofactor. Zn(2+) is required as a cofactor. It depends on Mn(2+) as a cofactor. The cofactor is Fe(2+).

Its subcellular location is the cytoplasm. The catalysed reaction is Release of N-terminal amino acids, preferentially methionine, from peptides and arylamides.. In terms of biological role, cotranslationally removes the N-terminal methionine from nascent proteins. The N-terminal methionine is often cleaved when the second residue in the primary sequence is small and uncharged (Met-Ala-, Cys, Gly, Pro, Ser, Thr, or Val). In Aspergillus terreus (strain NIH 2624 / FGSC A1156), this protein is Methionine aminopeptidase 2-1.